The sequence spans 131 residues: Small ribosomal subunit protein uS8 (131 aa).

It belongs to the universal ribosomal protein uS8 family. Part of the 30S ribosomal subunit. Contacts proteins S5 and S12.

One of the primary rRNA binding proteins, it binds directly to 16S rRNA central domain where it helps coordinate assembly of the platform of the 30S subunit. The sequence is that of Small ribosomal subunit protein uS8 from Paraburkholderia xenovorans (strain LB400).